Consider the following 81-residue polypeptide: Sulfur carrier protein TusA (81 aa).

The active-site Cysteine persulfide intermediate is C19.

This sequence belongs to the sulfur carrier protein TusA family.

Its subcellular location is the cytoplasm. Its function is as follows. Sulfur carrier protein which probably makes part of a sulfur-relay system. The polypeptide is Sulfur carrier protein TusA (Shewanella sp. (strain MR-4)).